Consider the following 359-residue polypeptide: EGF-like domain containing protein 2 (359 aa).

The N-terminal stretch at 1–20 (MPPFISHFFLLSTFASLALC) is a signal peptide. EGF-like domains are found at residues 21–55 (SFYC…FNCG) and 61–93 (ISAA…PTCQ). 6 disulfide bridges follow: Cys24–Cys37, Cys31–Cys43, Cys45–Cys54, Cys65–Cys75, Cys69–Cys81, and Cys83–Cys92.

Prismatic layer of shell (at protein level). Expressed primarily in the mantle with highest level in the mantle edge and lower level in the mantle pallium.

It is found in the secreted. This chain is EGF-like domain containing protein 2, found in Margaritifera margaritifera (Freshwater pearl mussel).